Here is a 639-residue protein sequence, read N- to C-terminus: MQAEQTRCAAARGSAEMESLWHAAPGDEEIPLHPPPTPGAMSLESDSSLDTLAEKIECDLMDLLGDMGPPCDIDEEEDQLFAEALPPLYSQPTENPPPPNAANSIPEQAGKQPAEGKTNTERNERPMRRKRREDGDVGQPNPRRRTHARSRSPRAGSTSSQQPPSSSGGARKPCVRREAGDRETSEKPARGKYCAPFPRQAPHQCQSPPAQTASQKPPPRPQRPPSTTAYSPDRTPHDHQERRHEGAGKMIRSVVTKQDARKPPRRVPHRGCGTGRHGRRTPEKWGAPPSMVVPLKFTREYWEKHRNELKKPVWRDYSRSACTARDPARAHDSGAECPPTEKRDERRTCAPSQPRWLREDRNAARFFDKAKDAFGGLALPTDDMCTRNRDLLRAMADEVVDDDDCEDLDLTRQMCFPTMIGPQSRAAGPVGARMDSWSELCRRAAFLKARWSSQPSVTRVARAVRSLYLTNCSFDELLEACDETLTWMLWHQFEDERLCPHDPIFSNIYALVQGLVTRLGAVLHCHLAASKSPLADPTRTSELPLQSATCPLTLFLTFADRFARVMHGHPHVTLVGHKIVDHEGVLRTLYLPGMCARKIPVVLDQHANVCRKEECRLLCAQLLGKQYTVGKFLCCDLYA.

Disordered stretches follow at residues 1–45 (MQAE…SLES), 63–287 (LLGD…KWGA), and 322–355 (CTAR…SQPR). Residues 142-152 (PRRRTHARSRS) are compositionally biased toward basic residues. A compositionally biased stretch (low complexity) spans 153–169 (PRAGSTSSQQPPSSSGG). Over residues 175–189 (VRREAGDRETSEKPA) the composition is skewed to basic and acidic residues. Residues 203–215 (HQCQSPPAQTASQ) show a composition bias toward polar residues. Composition is skewed to basic and acidic residues over residues 234–247 (RTPH…HEGA) and 326–348 (DPAR…ERRT). 4 residues coordinate Zn(2+): C525, H606, C610, and C615. The segment at 525–615 (CHLAASKSPL…HANVCRKEEC (91 aa)) adopts a CHC2-type zinc-finger fold.

Belongs to the HHV-1 ICP27 protein family.

The protein resides in the host cytoplasm. It is found in the host nucleus. Functionally, multifunctional regulator of the expression of viral genes that mediates nuclear export of viral intronless mRNAs. This immediate early (EI) protein promotes the nuclear export of viral intronless mRNAs. This is mRNA export factor from Amazona oratrix (yellow-headed parrot).